Consider the following 362-residue polypeptide: NAD(P)H-quinone oxidoreductase subunit 1, chloroplastic (362 aa).

The next 8 helical transmembrane spans lie at 31 to 51 (WVPL…LVIV), 99 to 119 (WLFT…YLVV), 132 to 152 (IGIF…LMSG), 178 to 198 (LAIC…VDIV), 206 to 226 (ILTW…IAAL), 268 to 288 (LVSG…PFAI), 303 to 323 (AFLG…AAIL), and 336 to 356 (LLDL…LLTA).

It belongs to the complex I subunit 1 family. NDH is composed of at least 16 different subunits, 5 of which are encoded in the nucleus.

Its subcellular location is the plastid. The protein localises to the chloroplast thylakoid membrane. The enzyme catalyses a plastoquinone + NADH + (n+1) H(+)(in) = a plastoquinol + NAD(+) + n H(+)(out). It carries out the reaction a plastoquinone + NADPH + (n+1) H(+)(in) = a plastoquinol + NADP(+) + n H(+)(out). Functionally, NDH shuttles electrons from NAD(P)H:plastoquinone, via FMN and iron-sulfur (Fe-S) centers, to quinones in the photosynthetic chain and possibly in a chloroplast respiratory chain. The immediate electron acceptor for the enzyme in this species is believed to be plastoquinone. Couples the redox reaction to proton translocation, and thus conserves the redox energy in a proton gradient. The protein is NAD(P)H-quinone oxidoreductase subunit 1, chloroplastic of Nephroselmis olivacea (Green alga).